The primary structure comprises 115 residues: Succinate dehydrogenase assembly factor 3, mitochondrial (115 aa).

It belongs to the complex I LYR family. SDHAF3 subfamily. As to quaternary structure, interacts with sdh2 within an sdh1-sdh2 subcomplex.

The protein resides in the mitochondrion matrix. Its function is as follows. Plays an essential role in the assembly of succinate dehydrogenase (SDH), an enzyme complex (also referred to as respiratory complex II) that is a component of both the tricarboxylic acid (TCA) cycle and the mitochondrial electron transport chain, and which couples the oxidation of succinate to fumarate with the reduction of ubiquinone (coenzyme Q) to ubiquinol. Promotes maturation of the iron-sulfur protein subunit sdh2 of the SDH catalytic dimer, protecting it from the deleterious effects of oxidants. May act together with SDHAF1. The chain is Succinate dehydrogenase assembly factor 3, mitochondrial from Schizosaccharomyces pombe (strain 972 / ATCC 24843) (Fission yeast).